Consider the following 647-residue polypeptide: Probable cobalt/nickel-exporting P-type ATPase (647 aa).

Transmembrane regions (helical) follow at residues 33–53 (WAAA…LGAP), 55–75 (AVVW…PAWV), 94–114 (AAIG…IVIF), 260–280 (AGVV…GADL), and 291–311 (MIVA…LSAI). D339 functions as the 4-aspartylphosphate intermediate in the catalytic mechanism. 2 residues coordinate Mg(2+): D532 and D536. The helical transmembrane segment at 587–607 (VIANLVMAGAAITTLVLWDLF) threads the bilayer.

This sequence belongs to the cation transport ATPase (P-type) (TC 3.A.3) family. Type IB subfamily.

It localises to the cell membrane. It carries out the reaction Ni(2+)(out) + ATP + H2O = Ni(2+)(in) + ADP + phosphate + H(+). The catalysed reaction is Co(2+)(out) + ATP + H2O = Co(2+)(in) + ADP + phosphate + H(+). Its function is as follows. Involved in heavy metal homeostasis. Probably exports nickel and cobalt ions out of the cell. The sequence is that of Probable cobalt/nickel-exporting P-type ATPase (ctpD) from Mycolicibacterium smegmatis (strain ATCC 700084 / mc(2)155) (Mycobacterium smegmatis).